The primary structure comprises 400 residues: Enoyl-[acyl-carrier-protein] reductase [NADH] (400 aa).

NAD(+) contacts are provided by residues 48 to 53 (GASTGY), 74 to 75 (FE), 111 to 112 (DA), and 139 to 140 (LA). Position 225 (Tyr225) interacts with substrate. The active-site Proton donor is the Tyr235. Residues Lys244 and 273 to 275 (VVT) contribute to the NAD(+) site.

It belongs to the TER reductase family. Monomer.

The catalysed reaction is a 2,3-saturated acyl-[ACP] + NAD(+) = a (2E)-enoyl-[ACP] + NADH + H(+). It functions in the pathway lipid metabolism; fatty acid biosynthesis. In terms of biological role, involved in the final reduction of the elongation cycle of fatty acid synthesis (FAS II). Catalyzes the reduction of a carbon-carbon double bond in an enoyl moiety that is covalently linked to an acyl carrier protein (ACP). The protein is Enoyl-[acyl-carrier-protein] reductase [NADH] of Burkholderia vietnamiensis (strain G4 / LMG 22486) (Burkholderia cepacia (strain R1808)).